A 427-amino-acid chain; its full sequence is Trigger factor (427 aa).

One can recognise a PPIase FKBP-type domain in the interval 163–248 (GDIAVIDFKG…IKSIKVKELP (86 aa)).

It belongs to the FKBP-type PPIase family. Tig subfamily.

Its subcellular location is the cytoplasm. The catalysed reaction is [protein]-peptidylproline (omega=180) = [protein]-peptidylproline (omega=0). Involved in protein export. Acts as a chaperone by maintaining the newly synthesized protein in an open conformation. Functions as a peptidyl-prolyl cis-trans isomerase. The polypeptide is Trigger factor (Clostridium beijerinckii (strain ATCC 51743 / NCIMB 8052) (Clostridium acetobutylicum)).